The following is a 401-amino-acid chain: 8-amino-7-oxononanoate synthase (401 aa).

Arg-24 is a substrate binding site. Position 111-112 (111-112 (GF)) interacts with pyridoxal 5'-phosphate. His-137 provides a ligand contact to substrate. Pyridoxal 5'-phosphate contacts are provided by Ser-183, His-211, and Thr-240. Position 243 is an N6-(pyridoxal phosphate)lysine (Lys-243). Thr-357 contacts substrate.

This sequence belongs to the class-II pyridoxal-phosphate-dependent aminotransferase family. BioF subfamily. In terms of assembly, homodimer. Pyridoxal 5'-phosphate serves as cofactor.

It carries out the reaction 6-carboxyhexanoyl-[ACP] + L-alanine + H(+) = (8S)-8-amino-7-oxononanoate + holo-[ACP] + CO2. The protein operates within cofactor biosynthesis; biotin biosynthesis. Catalyzes the decarboxylative condensation of pimeloyl-[acyl-carrier protein] and L-alanine to produce 8-amino-7-oxononanoate (AON), [acyl-carrier protein], and carbon dioxide. The chain is 8-amino-7-oxononanoate synthase from Xylella fastidiosa (strain M12).